The sequence spans 332 residues: Nucleotide-binding protein RC1_2868 (332 aa).

The segment at 1-27 (MTGQPLTMETAAGADAGTGAATHPADG) is disordered. Positions 10–22 (TAAGADAGTGAAT) are enriched in low complexity. An ATP-binding site is contributed by 36-43 (GMSGGGLS). 82–85 (DSRT) lines the GTP pocket. Basic and acidic residues-rich tracts occupy residues 302–312 (GHRDLDRRHPA) and 322–332 (VASRETPEEHR). A disordered region spans residues 302-332 (GHRDLDRRHPAPEPAPPWREVASRETPEEHR).

The protein belongs to the RapZ-like family.

Its function is as follows. Displays ATPase and GTPase activities. The chain is Nucleotide-binding protein RC1_2868 from Rhodospirillum centenum (strain ATCC 51521 / SW).